Reading from the N-terminus, the 538-residue chain is Chaperonin GroEL 1 (538 aa).

ATP is bound by residues 29-32, 86-90, glycine 413, 478-480, and aspartate 494; these read TLGP, DGTTT, and NAA.

Belongs to the chaperonin (HSP60) family. As to quaternary structure, forms a cylinder of 14 subunits composed of two heptameric rings stacked back-to-back. Interacts with the co-chaperonin GroES.

The protein resides in the cytoplasm. It carries out the reaction ATP + H2O + a folded polypeptide = ADP + phosphate + an unfolded polypeptide.. Its function is as follows. Together with its co-chaperonin GroES, plays an essential role in assisting protein folding. The GroEL-GroES system forms a nano-cage that allows encapsulation of the non-native substrate proteins and provides a physical environment optimized to promote and accelerate protein folding. This chain is Chaperonin GroEL 1, found in Corynebacterium glutamicum (strain ATCC 13032 / DSM 20300 / JCM 1318 / BCRC 11384 / CCUG 27702 / LMG 3730 / NBRC 12168 / NCIMB 10025 / NRRL B-2784 / 534).